The primary structure comprises 337 residues: LIX1-like protein (337 aa).

Positions 1–55 are disordered; the sequence is METMRAQRLQPGVGVGGRGTLRALRPGVTGAPTSAATPPVGPPPAPPPPAPPLPP. Positions 26–38 are enriched in low complexity; the sequence is PGVTGAPTSAATP. The span at 39 to 55 shows a compositional bias: pro residues; the sequence is PVGPPPAPPPPAPPLPP.

The protein belongs to the LIX1 family.

This chain is LIX1-like protein (Lix1l), found in Mus musculus (Mouse).